A 436-amino-acid polypeptide reads, in one-letter code: 3-ketoacyl-CoA thiolase (436 aa).

Cysteine 99 serves as the catalytic Acyl-thioester intermediate. Catalysis depends on proton acceptor residues histidine 392 and cysteine 422.

It belongs to the thiolase-like superfamily. Thiolase family. Heterotetramer of two alpha chains (FadJ) and two beta chains (FadI).

The protein localises to the cytoplasm. It catalyses the reaction an acyl-CoA + acetyl-CoA = a 3-oxoacyl-CoA + CoA. Its pathway is lipid metabolism; fatty acid beta-oxidation. In terms of biological role, catalyzes the final step of fatty acid oxidation in which acetyl-CoA is released and the CoA ester of a fatty acid two carbons shorter is formed. The polypeptide is 3-ketoacyl-CoA thiolase (Photorhabdus laumondii subsp. laumondii (strain DSM 15139 / CIP 105565 / TT01) (Photorhabdus luminescens subsp. laumondii)).